The sequence spans 331 residues: Mucin-15 (331 aa).

The N-terminal stretch at 1 to 22 (MLTLAKIALISSLFISLPFARP) is a signal peptide. Over 23 to 233 (QKQNPRRNVT…SDTPKENKNT (211 aa)) the chain is Extracellular. N-linked (GlcNAc...) asparagine glycans are attached at residues Asn-30, Asn-44, Asn-54, Asn-59, Asn-75, Asn-84, Asn-120, Asn-136, Asn-145, Asn-152, Asn-215, and Asn-222. The segment covering 124 to 162 (ADANPLQVSEHSNSTNSPSPENFTWSLDNDTMNSPEDIS) has biased composition (polar residues). Residues 124 to 186 (ADANPLQVSE…VTPFTAEPTE (63 aa)) form a disordered region. The helical transmembrane segment at 234 to 254 (GIVFGAILGAILGASLLSLVG) threads the bilayer. Residues 255-331 (YLLCGQRKTD…DAIPPLRPSI (77 aa)) are Cytoplasmic-facing. Positions 302–331 (AVSDSSMPEGGESLQDGIPMDAIPPLRPSI) are disordered.

In terms of processing, highly glycosylated (N- and O-linked carbohydrates).

The protein localises to the membrane. This chain is Mucin-15 (Muc15), found in Mus musculus (Mouse).